The chain runs to 525 residues: Cytochrome P450 714A2 (525 aa).

Over 1 to 3 (MES) the chain is Lumenal. Residues 4–24 (LVVHTVNAIWCIVIVGIFSVG) form a helical; Signal-anchor for type III membrane protein membrane-spanning segment. The Cytoplasmic segment spans residues 25–525 (YHVYGRAVVE…PQHGVVIRVV (501 aa)). C475 contributes to the heme binding site.

This sequence belongs to the cytochrome P450 family. Heme is required as a cofactor. In terms of tissue distribution, expressed in the shoot apical meristem (SAM) and petioles of young leaves, in the leaf margin and petiole vein of cotyledons, and at low levels in the filaments of developing flowers. Not detected in siliques.

The protein resides in the endoplasmic reticulum membrane. Its function is as follows. Involved in the inactivation of early gibberellin (GA) intermediates. The protein is Cytochrome P450 714A2 (CYP714A2) of Arabidopsis thaliana (Mouse-ear cress).